The primary structure comprises 214 residues: MSSAAAATRFIKCVTVGDGAVGKTCMLICYTCNKFPTDYIPTVFDNFSANVSVDGSVVNLGLWDTAGQEDYSRLRPLSYRGADVFILSFSLISRASYENVQKKWMPELRRFAPGVPVVLVGTKLDLREDRAYLADHPASSIITTEQGEELRKLIGAVAYIECSSKTQRNIKAVFDTAIKVVLQPPRHKDVTRKKLQSSSNRPVRRYFCGSACFA.

GTP-binding positions include 17–24, 20–25, Thr42, 64–68, Gly67, 122–125, 123–125, and 164–165; these read GDGAVGKT, AVGKTC, DTAGQ, TKLD, KLD, and SK. Positions 39–47 match the Effector region motif; it reads YIPTVFDNF.

Belongs to the small GTPase superfamily. Rho family. May interact with MPK1/MAPK6. Binds to RBOHB, preferentially in the GTP-bound form. Interacts with CCR1 in a GTP-dependent manner. In terms of processing, may be palmitoylated.

The protein resides in the cytoplasm. The protein localises to the membrane. Its function is as follows. Small GTPase playing a general role in disease resistance signaling pathway. Acts downstream of heterotrimeric G protein alpha subunit. Regulates cell death and reactive oxygen species production, probably through NADPH oxidase. Also involved in sphingolipid elicitor (SE)-dependent defense signaling. Activates phytoalexin production and alters defense-related genes. Down-regulates metallothionein 2b, a reactive oxygen scavenger. May control lignin synthesis through regulation of both NADPH oxidase and CCR1 activities during defense responses. Stimulates lignin synthesis in suspension cell culture. In Oryza sativa subsp. japonica (Rice), this protein is Rac-like GTP-binding protein 1 (RAC1).